We begin with the raw amino-acid sequence, 225 residues long: MDKLIAVLVLITLGSIMVNVGVHYVPVGGAPAAMATATGVGTGTTQLAAGSGLTGLITAAAMSQKPFLVILWNGALGAATMMAITMLVGNFIYVYGVGCPPCSAKVDKDPITGWDQEAYVTPGTEGHGIPTVSFVSGILGGLLGGSGGAMVYYALYKVLGMSAALAGILAMGFFYANAVLASYNIGGTIEGYHDPKFTRLPKAVVCSLVFGIVASVIAYYLSTLM.

The next 6 helical transmembrane spans lie at 5–25 (IAVL…VHYV), 40–60 (VGTG…ITAA), 67–87 (FLVI…ITML), 132–152 (VSFV…AMVY), 161–181 (MSAA…AVLA), and 204–224 (VVCS…LSTL).

The protein belongs to the MtrD family. In terms of assembly, the complex is composed of 8 subunits; MtrA, MtrB, MtrC, MtrD, MtrE, MtrF, MtrG and MtrH.

Its subcellular location is the cell membrane. It catalyses the reaction 5-methyl-5,6,7,8-tetrahydromethanopterin + coenzyme M + 2 Na(+)(in) = 5,6,7,8-tetrahydromethanopterin + methyl-coenzyme M + 2 Na(+)(out). The protein operates within one-carbon metabolism; methanogenesis from CO(2); methyl-coenzyme M from 5,10-methylene-5,6,7,8-tetrahydromethanopterin: step 2/2. Its function is as follows. Part of a complex that catalyzes the formation of methyl-coenzyme M and tetrahydromethanopterin from coenzyme M and methyl-tetrahydromethanopterin. This is an energy-conserving, sodium-ion translocating step. The polypeptide is Tetrahydromethanopterin S-methyltransferase subunit D (mtrD) (Methanopyrus kandleri (strain AV19 / DSM 6324 / JCM 9639 / NBRC 100938)).